The chain runs to 347 residues: UDP-3-O-acylglucosamine N-acyltransferase (347 aa).

His241 serves as the catalytic Proton acceptor.

This sequence belongs to the transferase hexapeptide repeat family. LpxD subfamily. Homotrimer.

The enzyme catalyses a UDP-3-O-[(3R)-3-hydroxyacyl]-alpha-D-glucosamine + a (3R)-hydroxyacyl-[ACP] = a UDP-2-N,3-O-bis[(3R)-3-hydroxyacyl]-alpha-D-glucosamine + holo-[ACP] + H(+). It participates in bacterial outer membrane biogenesis; LPS lipid A biosynthesis. In terms of biological role, catalyzes the N-acylation of UDP-3-O-acylglucosamine using 3-hydroxyacyl-ACP as the acyl donor. Is involved in the biosynthesis of lipid A, a phosphorylated glycolipid that anchors the lipopolysaccharide to the outer membrane of the cell. The sequence is that of UDP-3-O-acylglucosamine N-acyltransferase from Neisseria meningitidis serogroup A / serotype 4A (strain DSM 15465 / Z2491).